The sequence spans 377 residues: tRNA-specific 2-thiouridylase MnmA (377 aa).

ATP contacts are provided by residues 8 to 15 (GMSGGVDS) and methionine 34. An interaction with target base in tRNA region spans residues 94 to 96 (NPD). Cysteine 99 (nucleophile) is an active-site residue. Cysteine 99 and cysteine 201 are joined by a disulfide. Glycine 123 provides a ligand contact to ATP. The interaction with tRNA stretch occupies residues 151–153 (KDQ). The Cysteine persulfide intermediate role is filled by cysteine 201. Residues 315-316 (RY) are interaction with tRNA.

Belongs to the MnmA/TRMU family.

It is found in the cytoplasm. The enzyme catalyses S-sulfanyl-L-cysteinyl-[protein] + uridine(34) in tRNA + AH2 + ATP = 2-thiouridine(34) in tRNA + L-cysteinyl-[protein] + A + AMP + diphosphate + H(+). Catalyzes the 2-thiolation of uridine at the wobble position (U34) of tRNA, leading to the formation of s(2)U34. The polypeptide is tRNA-specific 2-thiouridylase MnmA (Acinetobacter baumannii (strain AB307-0294)).